Consider the following 231-residue polypeptide: 2-C-methyl-D-erythritol 4-phosphate cytidylyltransferase (231 aa).

This sequence belongs to the IspD/TarI cytidylyltransferase family. IspD subfamily.

The catalysed reaction is 2-C-methyl-D-erythritol 4-phosphate + CTP + H(+) = 4-CDP-2-C-methyl-D-erythritol + diphosphate. Its pathway is isoprenoid biosynthesis; isopentenyl diphosphate biosynthesis via DXP pathway; isopentenyl diphosphate from 1-deoxy-D-xylulose 5-phosphate: step 2/6. Catalyzes the formation of 4-diphosphocytidyl-2-C-methyl-D-erythritol from CTP and 2-C-methyl-D-erythritol 4-phosphate (MEP). The chain is 2-C-methyl-D-erythritol 4-phosphate cytidylyltransferase from Dictyoglomus thermophilum (strain ATCC 35947 / DSM 3960 / H-6-12).